A 235-amino-acid polypeptide reads, in one-letter code: AA9 family lytic polysaccharide monooxygenase D (235 aa).

An N-terminal signal peptide occupies residues 1–18 (MKAFFAVLAVVSAPFVLG). His-19 lines the Cu(2+) pocket. An O-linked (Man...) serine glycan is attached at Ser-29. Cys-61 and Cys-181 are disulfide-bonded. Residue His-94 coordinates Cu(2+). Positions 167 and 176 each coordinate O2. Tyr-178 contacts Cu(2+). N-linked (GlcNAc...) asparagine glycosylation occurs at Asn-221.

The protein belongs to the polysaccharide monooxygenase AA9 family. Cu(2+) serves as cofactor.

It localises to the secreted. It carries out the reaction [(1-&gt;4)-beta-D-glucosyl]n+m + reduced acceptor + O2 = 4-dehydro-beta-D-glucosyl-[(1-&gt;4)-beta-D-glucosyl]n-1 + [(1-&gt;4)-beta-D-glucosyl]m + acceptor + H2O.. Its function is as follows. Lytic polysaccharide monooxygenase (LPMO) that depolymerizes crystalline and amorphous polysaccharides via the oxidation of scissile alpha- or beta-(1-4)-glycosidic bonds, yielding only C1 oxidation products. Catalysis by LPMOs requires the reduction of the active-site copper from Cu(II) to Cu(I) by a reducing agent and H(2)O(2) or O(2) as a cosubstrate. The protein is AA9 family lytic polysaccharide monooxygenase D of Phanerodontia chrysosporium (White-rot fungus).